A 431-amino-acid chain; its full sequence is Peroxisomal biogenesis factor 3 (431 aa).

The Peroxisomal portion of the chain corresponds to 1–10 (MDFFRRHQKK). A helical transmembrane segment spans residues 11–28 (VLALVGVALSSYLFIDYV). At 29–431 (KKKFFEIQGR…VVYSSFDWAL (403 aa)) the chain is on the cytoplasmic side. A disordered region spans residues 95–126 (TDRVLALESSTSSSATAQTVPTMTSGATEEGE). A compositionally biased stretch (polar residues) spans 112–121 (QTVPTMTSGA).

It belongs to the peroxin-3 family.

It localises to the peroxisome membrane. In terms of biological role, involved in peroxisome biosynthesis. Seems to directly or indirectly sequesters components of the peroxisome biogenesis machinery. In Yarrowia lipolytica (strain CLIB 122 / E 150) (Yeast), this protein is Peroxisomal biogenesis factor 3 (PEX3).